The chain runs to 352 residues: DNA polymerase IV (352 aa).

Residues I6 to G186 enclose the UmuC domain. Residues D10 and D104 each contribute to the Mg(2+) site. E105 is an active-site residue.

The protein belongs to the DNA polymerase type-Y family. Monomer. Mg(2+) is required as a cofactor.

The protein localises to the cytoplasm. It carries out the reaction DNA(n) + a 2'-deoxyribonucleoside 5'-triphosphate = DNA(n+1) + diphosphate. Functionally, poorly processive, error-prone DNA polymerase involved in untargeted mutagenesis. Copies undamaged DNA at stalled replication forks, which arise in vivo from mismatched or misaligned primer ends. These misaligned primers can be extended by PolIV. Exhibits no 3'-5' exonuclease (proofreading) activity. May be involved in translesional synthesis, in conjunction with the beta clamp from PolIII. The polypeptide is DNA polymerase IV (Neisseria gonorrhoeae (strain ATCC 700825 / FA 1090)).